The sequence spans 345 residues: Opioid-binding protein/cell adhesion molecule (345 aa).

Residues 1–27 form the signal peptide; the sequence is MGVCGYLFLPWKCLVVVSLRLLFLVPT. 3 consecutive Ig-like C2-type domains span residues 39-126, 136-219, and 223-310; these read PKAM…PKTS, PQIM…VKIT, and PPYI…ASIT. N44, N70, and N140 each carry an N-linked (GlcNAc...) asparagine glycan. A disulfide bridge connects residues C57 and C115. Intrachain disulfides connect C157–C202 and C244–C296. N-linked (GlcNAc...) asparagine glycosylation is found at N285, N293, and N306. Residue N322 is the site of GPI-anchor amidated asparagine attachment. Positions 323-345 are cleaved as a propeptide — removed in mature form; that stretch reads SASRALACLWLSGTFFAHFFIKF.

The protein belongs to the immunoglobulin superfamily. IgLON family.

It is found in the cell membrane. Binds opioids in the presence of acidic lipids; probably involved in cell contact. The polypeptide is Opioid-binding protein/cell adhesion molecule (Opcml) (Rattus norvegicus (Rat)).